The primary structure comprises 423 residues: Lysosomal acid phosphatase (423 aa).

Residues 1 to 30 form the signal peptide; sequence MAGRQSGWSQAALLQFLLGMCLMVMPPIQA. The Lumenal portion of the chain corresponds to 31 to 380; the sequence is RSLRFVTLLY…QLASDTADTE (350 aa). The active-site Nucleophile is histidine 42. N-linked (GlcNAc...) asparagine glycosylation is found at asparagine 92, asparagine 133, asparagine 167, asparagine 177, asparagine 191, asparagine 197, and asparagine 267. 3 cysteine pairs are disulfide-bonded: cysteine 159–cysteine 370, cysteine 212–cysteine 310, and cysteine 345–cysteine 349. Aspartate 287 acts as the Proton donor in catalysis. N-linked (GlcNAc...) asparagine glycosylation is found at asparagine 322 and asparagine 331. A helical membrane pass occupies residues 381–401; the sequence is VIVALAVCGSILFLLIVLLLT. Over 402 to 423 the chain is Cytoplasmic; that stretch reads VLFRMQAQPPGYHHVADREDHA.

Belongs to the histidine acid phosphatase family. In terms of processing, the membrane-bound form is converted to the soluble form by sequential proteolytic processing. First, the C-terminal cytoplasmic tail is removed. Cleavage by a lysosomal protease releases the soluble form in the lysosome lumen.

It is found in the lysosome membrane. The protein resides in the lysosome lumen. It carries out the reaction a phosphate monoester + H2O = an alcohol + phosphate. The sequence is that of Lysosomal acid phosphatase (Acp2) from Rattus norvegicus (Rat).